Consider the following 717-residue polypeptide: Protein Teyrha-meyrha (717 aa).

The span at 140 to 152 shows a compositional bias: polar residues; that stretch reads FRTDSASPTCTSH. 6 disordered regions span residues 140–214, 229–270, 440–498, 511–539, 563–594, and 624–717; these read FRTD…SNPA, HLAA…APPV, KIPP…QPGK, SQKD…GEAP, DSCG…MDTA, and QRRQ…DTKA. Residues 195–214 are compositionally biased toward low complexity; the sequence is ATSSSASSSSSSSCSTSNPA. A compositionally biased stretch (basic residues) spans 235 to 263; sequence PHHHPHTHAHSHPHPLAHPHAHSHHHVGH. Residues 442–451 show a composition bias toward basic and acidic residues; the sequence is PPEDDAKSQE. A compositionally biased stretch (acidic residues) spans 452 to 466; that stretch reads EIETVDVESCNDEVP. Positions 471–482 are enriched in polar residues; the sequence is ELATPSSGSSGT. Positions 513–522 are enriched in basic and acidic residues; sequence KDPHPDEHDV. 2 stretches are compositionally biased toward low complexity: residues 523-533 and 570-580; these read STNVTTASSSS and NDTNSSSSTHN. Positions 630 to 640 are enriched in polar residues; sequence QNVGSSRSLEN. The segment covering 667–686 has biased composition (low complexity); sequence NNNNNNNNNNNNSNSNNNNN. Positions 687 to 704 are enriched in polar residues; sequence PSTKYAESMENSLSQLSS.

In embryos, expressed specifically in M12 (at protein level).

It localises to the nucleus. Its function is as follows. Required for the correct synaptic targeting of motoneurons RP5 and V to muscle 12 (M12). May be involved in the negative regulation of Tl in M12. Involved in the correct patterning of veins in the proximal (costal) region of the wing blade. This chain is Protein Teyrha-meyrha, found in Drosophila melanogaster (Fruit fly).